A 330-amino-acid chain; its full sequence is Adenylate isopentenyltransferase 5, chloroplastic (330 aa).

The N-terminal 39 residues, 1–39 (MKPCMTALRQVIQPLSLNFQGNMVDVPFFRRKDKVVFVM), are a transit peptide targeting the chloroplast. 40–47 (GATGTGKS) contributes to the ATP binding site.

It belongs to the IPP transferase family. As to expression, expressed in root primordia, columella root caps, upper part of young inflorescences, and fruit abscission zones.

It localises to the plastid. It is found in the chloroplast. The enzyme catalyses dimethylallyl diphosphate + ADP = N(6)-(dimethylallyl)adenosine 5'-diphosphate + diphosphate. The catalysed reaction is dimethylallyl diphosphate + ATP = N(6)-(dimethylallyl)adenosine 5'-triphosphate + diphosphate. Involved in cytokinin biosynthesis. Catalyzes the transfer of an isopentenyl group from dimethylallyl diphosphate (DMAPP) to ATP and ADP. The polypeptide is Adenylate isopentenyltransferase 5, chloroplastic (IPT5) (Arabidopsis thaliana (Mouse-ear cress)).